The primary structure comprises 780 residues: Gelsolin (780 aa).

The first 25 residues, 1–25, serve as a signal peptide directing secretion; it reads MAPYCSSLRSALLVLALCALSPSHA. Residues 28–48 form a disordered region; it reads ASRGRAQERAPQSRVSETRPS. An actin-severing region spans residues 51-174; it reads VVEHPEFLKA…YKKGGVASGF (124 aa). One copy of the Gelsolin-like 1 repeat lies at 74 to 155; it reads FDLVPVPPNL…EVQGFESSTF (82 aa). Phosphotyrosine is present on Tyr84. Ca(2+) is bound by residues Gly90, Asp91, Glu122, Asp134, Gly139, and Ala141. The actin-actin interfilament contact point stretch occupies residues 121–124; the sequence is DESG. Residue 160–167 coordinates a 1,2-diacyl-sn-glycero-3-phospho-(1D-myo-inositol-4,5-bisphosphate); it reads KSGLKYKK. Val170 contributes to the Ca(2+) binding site. A 1,2-diacyl-sn-glycero-3-phospho-(1D-myo-inositol-4,5-bisphosphate) is bound at residue 186-194; the sequence is RLFQVKGRR. The stretch at 196–268 is one Gelsolin-like 2 repeat; it reads VRATEVPVSW…SEEGSEPEAM (73 aa). 2 residues coordinate Ca(2+): Gly211 and Asp212. The cysteines at positions 213 and 226 are disulfide-linked. Ca(2+) contacts are provided by Glu234, Asp284, Glu327, Asp328, and Glu352. The tract at residues 244–286 is disordered; it reads GIRDNERSGRAQVHVSEEGSEPEAMLQVLGPKPDLPQGTEDTA. Residues 315 to 387 form a Gelsolin-like 3 repeat; the sequence is DENPFAQSAL…LPEGGETPLF (73 aa). 2 positions are modified to phosphotyrosine: Tyr407 and Tyr463. The tract at residues 432–780 is actin-binding, Ca-sensitive; that stretch reads AAQHGMDDDG…LDRALAELAA (349 aa). The Gelsolin-like 4 repeat unit spans residues 453–534; the sequence is SNKVLVDPAT…VQGKEPAHLM (82 aa). Residues Gly469, Asp470, Glu500, Asp512, Gly517, Pro519, and Thr549 each coordinate Ca(2+). Residues 576-640 form a Gelsolin-like 5 repeat; that stretch reads AVEVMPKAGA…EEGSEPDGFW (65 aa). Lys582 carries the post-translational modification N6-acetyllysine. Ca(2+)-binding residues include Asn589 and Asp590. Tyr601 carries the post-translational modification Phosphotyrosine. Glu612 provides a ligand contact to Ca(2+). A Phosphotyrosine modification is found at Tyr649. A Gelsolin-like 6 repeat occupies 679–754; it reads IEEVPGELMQ…VRQGFEPPSF (76 aa). Ca(2+) contacts are provided by Asp694, Asp695, and Glu717. The residue at position 740 (Thr740) is a Phosphothreonine.

It belongs to the villin/gelsolin family. Binds to actin and to fibronectin. Identified in a complex composed of ACTA1, COBL, GSN and TMSB4X. Interacts with the inactive form of EIF2AK2/PKR. Interacts with FLII. Phosphorylated on tyrosine residues in vitro.

It is found in the secreted. The protein localises to the cytoplasm. It localises to the cytoskeleton. Its function is as follows. Calcium-regulated, actin-modulating protein that binds to the plus (or barbed) ends of actin monomers or filaments, preventing monomer exchange (end-blocking or capping). It can promote the assembly of monomers into filaments (nucleation) as well as sever filaments already formed. Plays a role in ciliogenesis. The sequence is that of Gelsolin (Gsn) from Rattus norvegicus (Rat).